We begin with the raw amino-acid sequence, 535 residues long: CTP synthase (535 aa).

One can recognise a Glutamine amidotransferase type-1 domain in the interval arginine 300–lysine 535. Catalysis depends on for GATase activity residues cysteine 385, histidine 509, and glutamate 511.

Belongs to the CTP synthase family.

It catalyses the reaction UTP + L-glutamine + ATP + H2O = CTP + L-glutamate + ADP + phosphate + 2 H(+). The protein operates within pyrimidine metabolism; CTP biosynthesis via de novo pathway; CTP from UDP: step 2/2. Functionally, catalyzes the ATP-dependent amination of UTP to CTP with either L-glutamine or ammonia as the source of nitrogen. The chain is CTP synthase from Encephalitozoon cuniculi (strain GB-M1) (Microsporidian parasite).